A 654-amino-acid polypeptide reads, in one-letter code: Pyoverdine export ATP-binding/permease protein PvdT (654 aa).

The region spanning 6-245 (IELCDIRKAY…AHKGIQAEEL (240 aa)) is the ABC transporter domain. 43 to 50 (GASGSGKS) serves as a coordination point for ATP. Helical transmembrane passes span 282–302 (ALTL…LAVG), 529–549 (LSLM…IGVM), 584–604 (AIML…VVGA), and 614–634 (AFAL…GVVF).

It belongs to the ABC transporter superfamily. Macrolide exporter (TC 3.A.1.122) family. As to quaternary structure, part of the tripartite efflux system PvdRT-OpmQ, which is composed of an inner membrane component with both ATPase and permease domains, PvdT, a periplasmic membrane fusion protein, PvdR, and an outer membrane component, OpmQ.

Its subcellular location is the cell inner membrane. Has a basal ATPase activity that is stimulated by PvdR. In vitro, interaction with PVD influences the affinity of PvdT to PvdR. Its function is as follows. Part of the tripartite efflux system PvdRT-OpmQ required for the secretion into the extracellular milieu of the siderophore pyoverdine (PVD), which is involved in iron acquisition. This subunit binds PVD and drives its secretion by hydrolyzing ATP. The system is responsible for export of newly synthesized PVD after the final steps of biosynthesis have taken place in the periplasm. It is also responsible for recycling of PVD after internalization of ferri-PVD into the periplasm by the outer-membrane receptor FpvA and release of iron from PVD, thus making PVD available for new cycles of iron uptake. Contributes to resistance against ampicillin. This is Pyoverdine export ATP-binding/permease protein PvdT from Pseudomonas putida (strain ATCC 47054 / DSM 6125 / CFBP 8728 / NCIMB 11950 / KT2440).